The following is a 96-amino-acid chain: Co-chaperonin GroES (96 aa).

The protein belongs to the GroES chaperonin family. Heptamer of 7 subunits arranged in a ring. Interacts with the chaperonin GroEL.

It localises to the cytoplasm. Together with the chaperonin GroEL, plays an essential role in assisting protein folding. The GroEL-GroES system forms a nano-cage that allows encapsulation of the non-native substrate proteins and provides a physical environment optimized to promote and accelerate protein folding. GroES binds to the apical surface of the GroEL ring, thereby capping the opening of the GroEL channel. This Albidiferax ferrireducens (strain ATCC BAA-621 / DSM 15236 / T118) (Rhodoferax ferrireducens) protein is Co-chaperonin GroES.